Consider the following 232-residue polypeptide: Small ribosomal subunit protein uS3 (232 aa).

A KH type-2 domain is found at 39–107 (VRQFLTKELQ…PAQINIAEVR (69 aa)). The segment at 213–232 (AANAVEPKGDKPKKQRKGRK) is disordered.

It belongs to the universal ribosomal protein uS3 family. Part of the 30S ribosomal subunit. Forms a tight complex with proteins S10 and S14.

Functionally, binds the lower part of the 30S subunit head. Binds mRNA in the 70S ribosome, positioning it for translation. The polypeptide is Small ribosomal subunit protein uS3 (Vibrio campbellii (strain ATCC BAA-1116)).